The chain runs to 256 residues: Small ribosomal subunit protein uS3 (256 aa).

Positions I39–T121 constitute a KH type-2 domain. A disordered region spans residues R227–A256. The segment covering P246–A256 has biased composition (basic and acidic residues).

The protein belongs to the universal ribosomal protein uS3 family. In terms of assembly, part of the 30S ribosomal subunit. Forms a tight complex with proteins S10 and S14.

Binds the lower part of the 30S subunit head. Binds mRNA in the 70S ribosome, positioning it for translation. The protein is Small ribosomal subunit protein uS3 of Synechococcus sp. (strain JA-2-3B'a(2-13)) (Cyanobacteria bacterium Yellowstone B-Prime).